Here is a 122-residue protein sequence, read N- to C-terminus: MSSLAQKQVARLKRQTRVRKKITGSPARPRLNVFKSARHIYAQLIDDTTGATLASASTLAGDVAEGLSYTGNAEAAAKVGAAIAKKALEKEITAVVFDRNGFLYHGRIKALADAARENGLSF.

The protein belongs to the universal ribosomal protein uL18 family. Part of the 50S ribosomal subunit; part of the 5S rRNA/L5/L18/L25 subcomplex. Contacts the 5S and 23S rRNAs.

Functionally, this is one of the proteins that bind and probably mediate the attachment of the 5S RNA into the large ribosomal subunit, where it forms part of the central protuberance. The protein is Large ribosomal subunit protein uL18 of Citrifermentans bemidjiense (strain ATCC BAA-1014 / DSM 16622 / JCM 12645 / Bem) (Geobacter bemidjiensis).